The following is a 299-amino-acid chain: Sulfate adenylyltransferase subunit 2 (299 aa).

A disordered region spans residues 276-299 (EREGRVIDHDSAGSMEKKKREGYF).

This sequence belongs to the PAPS reductase family. CysD subfamily. As to quaternary structure, heterodimer composed of CysD, the smaller subunit, and CysN.

The catalysed reaction is sulfate + ATP + H(+) = adenosine 5'-phosphosulfate + diphosphate. Its pathway is sulfur metabolism; hydrogen sulfide biosynthesis; sulfite from sulfate: step 1/3. Its function is as follows. With CysN forms the ATP sulfurylase (ATPS) that catalyzes the adenylation of sulfate producing adenosine 5'-phosphosulfate (APS) and diphosphate, the first enzymatic step in sulfur assimilation pathway. APS synthesis involves the formation of a high-energy phosphoric-sulfuric acid anhydride bond driven by GTP hydrolysis by CysN coupled to ATP hydrolysis by CysD. This chain is Sulfate adenylyltransferase subunit 2, found in Pseudoalteromonas translucida (strain TAC 125).